Reading from the N-terminus, the 836-residue chain is Enhancer of polycomb homolog 1 (836 aa).

K319 is covalently cross-linked (Glycyl lysine isopeptide (Lys-Gly) (interchain with G-Cter in SUMO2)). 2 disordered regions span residues 335–360 (KRKY…SPAA) and 372–401 (YDFP…PDGP). Positions 346–360 (PSSAAATPQQTSPAA) are enriched in low complexity. A Phosphoserine modification is found at S539. K673 participates in a covalent cross-link: Glycyl lysine isopeptide (Lys-Gly) (interchain with G-Cter in SUMO2). Residues 802 to 829 (VPSSSSVDSVPRENHESEKPALNNIADN) are disordered. Over residues 811–820 (VPRENHESEK) the composition is skewed to basic and acidic residues.

This sequence belongs to the enhancer of polycomb family. As to quaternary structure, component of the NuA4 histone acetyltransferase complex which contains the catalytic subunit KAT5/TIP60 and the subunits EP400, TRRAP/PAF400, BRD8/SMAP, EPC1, DMAP1/DNMAP1, RUVBL1/TIP49, RUVBL2, ING3, actin, ACTL6A/BAF53A, MORF4L1/MRG15, MORF4L2/MRGX, MRGBP, YEATS4/GAS41, VPS72/YL1 and MEAF6. KAT5/TIP60, EPC1, and ING3 together constitute a minimal HAT complex termed Piccolo NuA4. Component of a NuA4-related complex which contains EP400, TRRAP/PAF400, SRCAP, BRD8/SMAP, EPC1, DMAP1/DNMAP1, RUVBL1/TIP49, RUVBL2, actin, ACTL6A/BAF53A, VPS72 and YEATS4/GAS41. Interacts with TRIM27. Interacts with MBTD1; interaction is direct and promotes recruitment of MBTD1 into the NuA4 histone acetyltransferase complex.

It is found in the nucleus. Its subcellular location is the cytoplasm. Functionally, component of the NuA4 histone acetyltransferase (HAT) complex, a multiprotein complex involved in transcriptional activation of select genes principally by acetylation of nucleosomal histones H4 and H2A. The NuA4 complex plays a direct role in repair of DNA double-strand breaks (DSBs) by promoting homologous recombination (HR). The NuA4 complex is also required for spermatid development by promoting acetylation of histones: histone acetylation is required for histone replacement during the transition from round to elongating spermatids. In the NuA4 complex, EPC1 is required to recruit MBTD1 into the complex. In Homo sapiens (Human), this protein is Enhancer of polycomb homolog 1.